We begin with the raw amino-acid sequence, 186 residues long: Elongation factor P (186 aa).

K33 is subject to N6-(3,6-diaminohexanoyl)-5-hydroxylysine.

The protein belongs to the elongation factor P family. May be beta-lysylated on the epsilon-amino group of Lys-33 by the combined action of EpmA and EpmB, and then hydroxylated on the C5 position of the same residue by EpmC (if this protein is present). Lysylation is critical for the stimulatory effect of EF-P on peptide-bond formation. The lysylation moiety may extend toward the peptidyltransferase center and stabilize the terminal 3-CCA end of the tRNA. Hydroxylation of the C5 position on Lys-33 may allow additional potential stabilizing hydrogen-bond interactions with the P-tRNA.

It is found in the cytoplasm. The protein operates within protein biosynthesis; polypeptide chain elongation. Involved in peptide bond synthesis. Alleviates ribosome stalling that occurs when 3 or more consecutive Pro residues or the sequence PPG is present in a protein, possibly by augmenting the peptidyl transferase activity of the ribosome. Modification of Lys-33 is required for alleviation. The polypeptide is Elongation factor P (Acidithiobacillus ferrooxidans (strain ATCC 23270 / DSM 14882 / CIP 104768 / NCIMB 8455) (Ferrobacillus ferrooxidans (strain ATCC 23270))).